The sequence spans 405 residues: Tyrosine-protein phosphatase non-receptor type eak-6 (405 aa).

The Tyrosine-protein phosphatase domain occupies 30 to 309 (INQRINIIAD…SFIYDIIIKY (280 aa)). The active-site Phosphocysteine intermediate is Cys-248.

It belongs to the protein-tyrosine phosphatase family. In terms of tissue distribution, expressed in the 2 embryonic head hypodermal cells XXXL/R.

It localises to the cytoplasm. Its subcellular location is the cell membrane. It catalyses the reaction O-phospho-L-tyrosyl-[protein] + H2O = L-tyrosyl-[protein] + phosphate. In terms of biological role, putative phosphatase which, together with eak-4 and sdf-9, negatively regulates dauer larva formation downstream of insulin-like receptor daf-2 and in parallel of age-1, pdk-1 and akt-1. This Caenorhabditis elegans protein is Tyrosine-protein phosphatase non-receptor type eak-6.